The chain runs to 350 residues: MKVKAPGRINIIGEHTDYNDGYVLPFAVNRYVFLSIEGSDRFIFHSENVNETVEMEKIEKLNKWTDYISGVIASFEKRGYRVSPVKISVSSNLPMGAGLSSSAALEVATAYAISEYFSFNVPKLELVKIAREAEVEFVGVRCGIMDQFTSAFGKKDHAIFLDTMTLEYEYVPLRLEGYEINLVDSNVKHELSSSEYNKRRQECEEVLKTLGKKSFREVTKEDLERLSGTLRKRAQHVLEENERVLKSVQALKEGDFETLGKLLFSSHESLRDLYEVSCEETDFIVDYLRGKEGILGARMVGGGFGGGVIVLSKKGAFGKIKEELVESYKKHFGIDLTFHEIESSDGVQKI.

E14–D17 contacts substrate. ATP contacts are provided by residues S46 and G96 to S102. Residues S102 and E134 each contribute to the Mg(2+) site. The Proton acceptor role is filled by D146. Y196 contacts substrate.

This sequence belongs to the GHMP kinase family. GalK subfamily.

The protein resides in the cytoplasm. The enzyme catalyses alpha-D-galactose + ATP = alpha-D-galactose 1-phosphate + ADP + H(+). It functions in the pathway carbohydrate metabolism; galactose metabolism. Catalyzes the transfer of the gamma-phosphate of ATP to D-galactose to form alpha-D-galactose-1-phosphate (Gal-1-P). This is Galactokinase from Thermotoga petrophila (strain ATCC BAA-488 / DSM 13995 / JCM 10881 / RKU-1).